The following is a 379-amino-acid chain: Queuine tRNA-ribosyltransferase (379 aa).

The active-site Proton acceptor is the Asp94. Residues 94 to 98 (DSGGF), Asp148, Gln191, and Gly218 contribute to the substrate site. Positions 249 to 255 (GVGSPDS) are RNA binding. Asp268 serves as the catalytic Nucleophile. Residues 273–277 (TRIAR) are RNA binding; important for wobble base 34 recognition. Positions 306, 308, 311, and 337 each coordinate Zn(2+).

The protein belongs to the queuine tRNA-ribosyltransferase family. As to quaternary structure, homodimer. Within each dimer, one monomer is responsible for RNA recognition and catalysis, while the other monomer binds to the replacement base PreQ1. Requires Zn(2+) as cofactor.

The enzyme catalyses 7-aminomethyl-7-carbaguanine + guanosine(34) in tRNA = 7-aminomethyl-7-carbaguanosine(34) in tRNA + guanine. The protein operates within tRNA modification; tRNA-queuosine biosynthesis. Its function is as follows. Catalyzes the base-exchange of a guanine (G) residue with the queuine precursor 7-aminomethyl-7-deazaguanine (PreQ1) at position 34 (anticodon wobble position) in tRNAs with GU(N) anticodons (tRNA-Asp, -Asn, -His and -Tyr). Catalysis occurs through a double-displacement mechanism. The nucleophile active site attacks the C1' of nucleotide 34 to detach the guanine base from the RNA, forming a covalent enzyme-RNA intermediate. The proton acceptor active site deprotonates the incoming PreQ1, allowing a nucleophilic attack on the C1' of the ribose to form the product. After dissociation, two additional enzymatic reactions on the tRNA convert PreQ1 to queuine (Q), resulting in the hypermodified nucleoside queuosine (7-(((4,5-cis-dihydroxy-2-cyclopenten-1-yl)amino)methyl)-7-deazaguanosine). The polypeptide is Queuine tRNA-ribosyltransferase (Bacillus cereus (strain G9842)).